A 274-amino-acid polypeptide reads, in one-letter code: Diaminopimelate epimerase (274 aa).

Substrate-binding residues include Asn11, Gln44, and Asn64. Catalysis depends on Cys73, which acts as the Proton donor. Substrate-binding positions include 74 to 75, Asn157, Asn190, and 208 to 209; these read GN and ER. Catalysis depends on Cys217, which acts as the Proton acceptor. Substrate is bound at residue 218–219; the sequence is GS.

The protein belongs to the diaminopimelate epimerase family. As to quaternary structure, homodimer.

The protein localises to the cytoplasm. The enzyme catalyses (2S,6S)-2,6-diaminopimelate = meso-2,6-diaminopimelate. The protein operates within amino-acid biosynthesis; L-lysine biosynthesis via DAP pathway; DL-2,6-diaminopimelate from LL-2,6-diaminopimelate: step 1/1. Catalyzes the stereoinversion of LL-2,6-diaminopimelate (L,L-DAP) to meso-diaminopimelate (meso-DAP), a precursor of L-lysine and an essential component of the bacterial peptidoglycan. The sequence is that of Diaminopimelate epimerase from Yersinia enterocolitica serotype O:8 / biotype 1B (strain NCTC 13174 / 8081).